The following is an 82-amino-acid chain: Putative membrane protein insertion efficiency factor (82 aa).

The protein belongs to the UPF0161 family.

The protein resides in the cell membrane. Functionally, could be involved in insertion of integral membrane proteins into the membrane. This Streptococcus thermophilus (strain ATCC BAA-491 / LMD-9) protein is Putative membrane protein insertion efficiency factor.